The following is an 806-amino-acid chain: Integrin beta-7 (806 aa).

A signal peptide spans 1–19; that stretch reads MVDSSTVLIFLLVLGGGQS. Residues 20–724 are Extracellular-facing; it reads ELDTKITSSG…PQEKGVDHTR (705 aa). The PSI domain occupies 44 to 92; sequence SCQPVPSCQKCILSHPSCAWCKQLNFTASGEAEARRCARREELLARGCP. 26 cysteine pairs are disulfide-bonded: cysteine 51–cysteine 476, cysteine 54–cysteine 80, cysteine 64–cysteine 91, cysteine 216–cysteine 223, cysteine 271–cysteine 311, cysteine 412–cysteine 428, cysteine 448–cysteine 474, cysteine 478–cysteine 497, cysteine 488–cysteine 500, cysteine 502–cysteine 511, cysteine 513–cysteine 545, cysteine 527–cysteine 543, cysteine 537–cysteine 548, cysteine 550–cysteine 559, cysteine 561–cysteine 582, cysteine 566–cysteine 580, cysteine 574–cysteine 585, cysteine 587–cysteine 596, cysteine 598–cysteine 621, cysteine 605–cysteine 619, cysteine 613–cysteine 624, cysteine 626–cysteine 635, cysteine 638–cysteine 641, cysteine 645–cysteine 688, cysteine 651–cysteine 670, and cysteine 654–cysteine 666. N-linked (GlcNAc...) asparagine glycosylation occurs at asparagine 68. Residues 98–107 are compositionally biased toward basic and acidic residues; sequence EPRGRQEVLQ. Positions 98 to 123 are disordered; that stretch reads EPRGRQEVLQDKPLSQGDRGEGATQL. In terms of domain architecture, VWFA spans 150-389; sequence YPVDLYYLMD…QLIMDAYDSL (240 aa). Mg(2+)-binding residues include serine 161 and serine 163. Positions 163, 166, 167, and 198 each coordinate Ca(2+). Asparagine 250 carries an N-linked (GlcNAc...) asparagine glycan. 4 residues coordinate Ca(2+): asparagine 254, aspartate 256, proline 258, and glutamate 259. Glutamate 259 serves as a coordination point for Mg(2+). Residue asparagine 279 is glycosylated (N-linked (GlcNAc...) asparagine). Ca(2+) contacts are provided by aspartate 289 and glutamate 373. The N-linked (GlcNAc...) asparagine glycan is linked to asparagine 434. I-EGF domains are found at residues 478–512, 513–560, 561–597, and 598–636; these read CGDA…QLCE, CSEA…RLCE, CDDA…RACE, and CSKS…ALCD. Asparagine 531 is a glycosylation site (N-linked (GlcNAc...) asparagine). A glycan (N-linked (GlcNAc...) asparagine) is linked at asparagine 590. N-linked (GlcNAc...) asparagine glycosylation is found at asparagine 665 and asparagine 674. Residues 725 to 745 traverse the membrane as a helical segment; that stretch reads AIILGCTGGIVAVGLGLVLAY. The Cytoplasmic segment spans residues 746–806; that stretch reads RLSVEIYDRR…PSLSLTREAD (61 aa). Residues 786–806 are disordered; it reads NPRFQGTNGRSPSLSLTREAD.

Belongs to the integrin beta chain family. Heterodimer of an alpha and a beta subunit. ITGB7/beta-7 associates with either ITGA4/alpha-4 or ITGAE/alpha-E. Integrin ITGA4/ITGB7 interacts with MADCAM1. Integrin ITGA4/ITGB7 interacts with VCAM1 and fibronectin. Interacts with FLNA (via filamin repeats 4, 9, 12, 17, 19, 21, and 23).

It localises to the cell membrane. Functionally, integrin ITGA4/ITGB7 (alpha-4/beta-7) (Peyer patches-specific homing receptor LPAM-1) is an adhesion molecule that mediates lymphocyte migration and homing to gut-associated lymphoid tissue (GALT). Integrin ITGA4/ITGB7 interacts with the cell surface adhesion molecules MADCAM1 which is normally expressed by the vascular endothelium of the gastrointestinal tract. Also interacts with VCAM1 and fibronectin, an extracellular matrix component. It recognizes one or more domains within the alternatively spliced CS-1 region of fibronectin. Interactions involve the tripeptide L-D-T in MADCAM1, and L-D-V in fibronectin. Integrin ITGAE/ITGB7 (alpha-E/beta-7, HML-1) is a receptor for E-cadherin. This chain is Integrin beta-7 (Itgb7), found in Mus musculus (Mouse).